Here is a 270-residue protein sequence, read N- to C-terminus: Cerberus (270 aa).

Residues 1-20 form the signal peptide; the sequence is MLLNVLRICIIVCLVNDGAG. Residues asparagine 103, asparagine 112, and asparagine 154 are each glycosylated (N-linked (GlcNAc...) asparagine). Cystine bridges form between cysteine 169-cysteine 215, cysteine 183-cysteine 229, cysteine 193-cysteine 245, and cysteine 197-cysteine 247. The 85-residue stretch at 169–253 folds into the CTCK domain; it reads CKTLPFTQNI…ECTCEAHKSN (85 aa). The N-linked (GlcNAc...) asparagine glycan is linked to asparagine 228.

The protein belongs to the DAN family. The long chain interacts with nodal/nr-1, bmp4 and wnt8, thereby inhibiting their function. The short chain interacts with nodal/nr-1 but not bmp4 or wnt8. In terms of tissue distribution, a component of the Nieuwkoop signaling center in the blastula. Expressed transiently in a broad anterior domain of the gastrula, including the anterior endoderm of the Spemann's organizer and more laterally the cardiac primordia. Expression is excluded from the prospective prechordal plate region and the ring of cells that give rise to the trunk-tail mesoderm.

The protein localises to the secreted. Inhibits wnt, nodal/nr-1 and bmp signaling in the embryo to promote head formation and anterior neural induction. Within the endoderm, acts as an essential mediator of nodal/nr-1-induced cardiogenesis in the overlying mesoderm. This chain is Cerberus, found in Xenopus laevis (African clawed frog).